The chain runs to 230 residues: Cytidylate kinase (230 aa).

Residue Gly-12–Thr-20 coordinates ATP.

This sequence belongs to the cytidylate kinase family. Type 1 subfamily.

The protein localises to the cytoplasm. The enzyme catalyses CMP + ATP = CDP + ADP. It carries out the reaction dCMP + ATP = dCDP + ADP. This chain is Cytidylate kinase, found in Shewanella loihica (strain ATCC BAA-1088 / PV-4).